The chain runs to 1651 residues: Alsin (1651 aa).

RCC1 repeat units lie at residues Asp59–Glu108, Ser109–Ile167, and Arg169–Gln218. Positions Arg444–Leu476 are disordered. The span at Gln450–Leu461 shows a compositional bias: polar residues. Phosphoserine occurs at positions 459, 460, 477, and 486. Thr504 bears the Phosphothreonine mark. RCC1 repeat units lie at residues Arg519–Ala570 and Ser572–Asp621. Lys527 is modified (N6-acetyllysine). In terms of domain architecture, DH spans Gly684–Lys879. Residues Gly895–Ala1001 form the PH domain. MORN repeat units follow at residues Tyr1043–Val1065, Tyr1066–Leu1088, Tyr1094–Val1116, Phe1117–Ser1139, Phe1145–Glu1167, Tyr1169–Tyr1191, Tyr1192–Ile1214, and Tyr1215–Tyr1238. Ser1329 is subject to Phosphoserine. The VPS9 domain occupies Lys1507–Asn1651.

In terms of assembly, forms a heteromeric complex with ALS2CL. Interacts with ALS2CL.

Functionally, may act as a GTPase regulator. Controls survival and growth of spinal motoneurons. This chain is Alsin (Als2), found in Rattus norvegicus (Rat).